The chain runs to 90 residues: U-scoloptoxin(15)-Sa3a (90 aa).

Positions M1 to S18 are cleaved as a signal peptide.

The protein belongs to the scoloptoxin-15 family. Contains 3 disulfide bonds. Expressed by the venom gland.

Its subcellular location is the secreted. The chain is U-scoloptoxin(15)-Sa3a from Scolopendra alternans (Florida Keys giant centipede).